A 156-amino-acid chain; its full sequence is Small ribosomal subunit protein uS7 (156 aa).

This sequence belongs to the universal ribosomal protein uS7 family. In terms of assembly, part of the 30S ribosomal subunit. Contacts proteins S9 and S11.

One of the primary rRNA binding proteins, it binds directly to 16S rRNA where it nucleates assembly of the head domain of the 30S subunit. Is located at the subunit interface close to the decoding center, probably blocks exit of the E-site tRNA. The protein is Small ribosomal subunit protein uS7 of Staphylococcus aureus (strain USA300).